We begin with the raw amino-acid sequence, 758 residues long: GPI ethanolamine phosphate transferase 2 (758 aa).

N28, N77, and N178 each carry an N-linked (GlcNAc...) asparagine glycan. Helical transmembrane passes span 405 to 425 (LVAISILGACSILSLILFRNL), 431 to 451 (LLAFAPFVVQNIIIVFSSSFI), and 455 to 472 (HVIWYFAAVSLSLLQLLN). Residue N493 is glycosylated (N-linked (GlcNAc...) asparagine). 6 helical membrane-spanning segments follow: residues 533–553 (PSPINFLSSMFIAFYKLMPII), 561–581 (PIIASFDYTFFVRIIWSLLLI), 598–618 (LFILLLTRLENMGLYLLYDIW), 667–687 (IFAVGILLFTSVFAGALWWCL), 698–718 (VKTFWIMSSISLTFLCISCFI), and 733–753 (LLYNASWASMYFLAKCLISTI).

The protein belongs to the PIGG/PIGN/PIGO family. PIGG subfamily.

The protein localises to the endoplasmic reticulum membrane. The protein operates within glycolipid biosynthesis; glycosylphosphatidylinositol-anchor biosynthesis. In terms of biological role, ethanolamine phosphate transferase involved in glycosylphosphatidylinositol-anchor biosynthesis. Transfers ethanolamine phosphate to the GPI second mannose. In Schizosaccharomyces pombe (strain 972 / ATCC 24843) (Fission yeast), this protein is GPI ethanolamine phosphate transferase 2 (las21).